We begin with the raw amino-acid sequence, 145 residues long: Basic phospholipase A2 KPA2 (145 aa).

The N-terminal stretch at 1-19 is a signal peptide; sequence MYPAHLLVLVAVCVSLLGA. Positions 20–27 are excised as a propeptide; it reads ANIPPQPL. 7 disulfide bridges follow: C38/C97, C52/C144, C54/C70, C69/C125, C76/C118, C86/C111, and C104/C116. Residues Y53, G55, and G57 each contribute to the Ca(2+) site. H73 is an active-site residue. Residue D74 coordinates Ca(2+). D119 is an active-site residue.

It belongs to the phospholipase A2 family. Group I subfamily. D49 sub-subfamily. As to quaternary structure, monomer. The cofactor is Ca(2+). In terms of tissue distribution, expressed by the venom gland.

It localises to the secreted. It carries out the reaction a 1,2-diacyl-sn-glycero-3-phosphocholine + H2O = a 1-acyl-sn-glycero-3-phosphocholine + a fatty acid + H(+). In terms of biological role, snake venom phospholipase A2 (PLA2) that shows anticoagulant and neurotoxic activities. PLA2 catalyzes the calcium-dependent hydrolysis of the 2-acyl groups in 3-sn-phosphoglycerides. The chain is Basic phospholipase A2 KPA2 from Bungarus caeruleus (Indian krait).